A 144-amino-acid polypeptide reads, in one-letter code: Small ribosomal subunit protein uS19 (144 aa).

Belongs to the universal ribosomal protein uS19 family.

Functionally, protein S19 forms a complex with S13 that binds strongly to the 16S ribosomal RNA. This is Small ribosomal subunit protein uS19 from Hyperthermus butylicus (strain DSM 5456 / JCM 9403 / PLM1-5).